Here is a 191-residue protein sequence, read N- to C-terminus: NADH-quinone oxidoreductase subunit B (191 aa).

[4Fe-4S] cluster contacts are provided by Cys-70, Cys-71, Cys-135, and Cys-165.

It belongs to the complex I 20 kDa subunit family. As to quaternary structure, NDH-1 is composed of 14 different subunits. Subunits NuoB, C, D, E, F, and G constitute the peripheral sector of the complex. The cofactor is [4Fe-4S] cluster.

Its subcellular location is the cell inner membrane. The enzyme catalyses a quinone + NADH + 5 H(+)(in) = a quinol + NAD(+) + 4 H(+)(out). Functionally, NDH-1 shuttles electrons from NADH, via FMN and iron-sulfur (Fe-S) centers, to quinones in the respiratory chain. The immediate electron acceptor for the enzyme in this species is believed to be ubiquinone. Couples the redox reaction to proton translocation (for every two electrons transferred, four hydrogen ions are translocated across the cytoplasmic membrane), and thus conserves the redox energy in a proton gradient. This Parvibaculum lavamentivorans (strain DS-1 / DSM 13023 / NCIMB 13966) protein is NADH-quinone oxidoreductase subunit B.